Reading from the N-terminus, the 104-residue chain is Glutaredoxin (104 aa).

The region spanning methionine 3 to lysine 103 is the Glutaredoxin domain. Cysteine 23 and cysteine 26 are joined by a disulfide.

The protein belongs to the glutaredoxin family. CPYC subfamily.

The protein localises to the cytoplasm. In terms of biological role, has a glutathione-disulfide oxidoreductase activity in the presence of NADPH and glutathione reductase. Reduces low molecular weight disulfides and proteins. The protein is Glutaredoxin of Vernicia fordii (Tung).